We begin with the raw amino-acid sequence, 417 residues long: Gamma-glutamyl phosphate reductase (417 aa).

It belongs to the gamma-glutamyl phosphate reductase family.

It is found in the cytoplasm. The enzyme catalyses L-glutamate 5-semialdehyde + phosphate + NADP(+) = L-glutamyl 5-phosphate + NADPH + H(+). It functions in the pathway amino-acid biosynthesis; L-proline biosynthesis; L-glutamate 5-semialdehyde from L-glutamate: step 2/2. Functionally, catalyzes the NADPH-dependent reduction of L-glutamate 5-phosphate into L-glutamate 5-semialdehyde and phosphate. The product spontaneously undergoes cyclization to form 1-pyrroline-5-carboxylate. This chain is Gamma-glutamyl phosphate reductase, found in Bacteroides thetaiotaomicron (strain ATCC 29148 / DSM 2079 / JCM 5827 / CCUG 10774 / NCTC 10582 / VPI-5482 / E50).